The primary structure comprises 145 residues: Basic phospholipase A2 cL038 (145 aa).

The first 21 residues, 1-21 (MYPAHLLVLLAVCVSLLGASA), serve as a signal peptide directing secretion. Residues 22-27 (IPPLPL) constitute a propeptide that is removed on maturation. Intrachain disulfides connect Cys38-Cys98, Cys54-Cys144, Cys56-Cys72, Cys71-Cys125, Cys78-Cys118, Cys87-Cys111, and Cys105-Cys116. Residues Tyr55, Gly57, and Gly59 each contribute to the Ca(2+) site. His75 is an active-site residue. Asp76 is a Ca(2+) binding site. Residue Asp119 is part of the active site.

This sequence belongs to the phospholipase A2 family. Group I subfamily. D49 sub-subfamily. Requires Ca(2+) as cofactor. As to expression, expressed by the venom gland.

It localises to the secreted. The enzyme catalyses a 1,2-diacyl-sn-glycero-3-phosphocholine + H2O = a 1-acyl-sn-glycero-3-phosphocholine + a fatty acid + H(+). Functionally, PLA2 catalyzes the calcium-dependent hydrolysis of the 2-acyl groups in 3-sn-phosphoglycerides. The chain is Basic phospholipase A2 cL038 from Laticauda semifasciata (Black-banded sea krait).